A 168-amino-acid chain; its full sequence is DAZ-associated protein 2 (168 aa).

A compositionally biased stretch (low complexity) spans 1–13; that stretch reads MNSKGQYPTQPTY. Positions 1 to 25 are disordered; it reads MNSKGQYPTQPTYPVQPPGNPVYPQ. The PPAY signature appears at 39–42; the sequence is PPAY. A Phosphoserine modification is found at serine 77.

In terms of assembly, interacts with SOX6. Interacts with DAZ1 and DAZL. Interacts with IL17RB. May interact with FAM168B. Interacts with INCA1. Interacts with EIF4G1 and EIF4G2. Interacts (via PPAY motif) with NEDD4 (via WW domains). Interacts with transcription factor TCF4; the interaction results in localization of DAZAP2 to the nucleus. Interacts with transcription factors TCF7 and TCF7L1. Interacts with transcription factor LEF1. Interacts with serine/threonine-protein kinase HIPK2; the interaction results in phosphorylation of DAZAP2 which causes localization of DAZAP2 to the nucleus, reduces interaction of DAZAP2 with HIPK2 and prevents DAZAP2-dependent degradation of HIPK2. Interacts with ubiquitin ligase SIAH1; the interaction is decreased following phosphorylation of DAZAP2 by HIPK2. Interacts with TP53; the interaction is triggered by DNA damage. Post-translationally, ubiquitinated by SMURF2, leading to proteasomal degradation. Ubiquitinated by NEDD4, leading to proteasomal degradation. Following DNA damage, phosphorylated by HIPK2 which promotes DAZAP2 localization to the nucleus, reduces interaction of DAZAP2 with HIPK2 and SIAH1, and prevents DAZAP2-dependent ubiquitination of HIPK2 by E3 ubiquitin-protein ligase SIAH1 and subsequent HIPK2 proteasomal degradation.

The protein resides in the cytoplasm. It is found in the nucleus. It localises to the nucleus speckle. Its subcellular location is the nuclear body. The protein localises to the stress granule. In terms of biological role, in unstressed cells, promotes SIAH1-mediated polyubiquitination and degradation of the serine/threonine-protein kinase HIPK2, probably by acting as a loading factor that potentiates complex formation between HIPK2 and ubiquitin ligase SIAH1. In response to DNA damage, localizes to the nucleus following phosphorylation by HIPK2 and modulates the expression of a subset of TP53/p53 target genes by binding to TP53 at target gene promoters. This limits the expression of a number of cell death-mediating TP53 target genes, reducing DNA damage-induced cell death. Enhances the binding of transcription factor TCF7L2/TCF4, a Wnt signaling pathway effector, to the promoters of target genes. Plays a role in stress granule formation. The protein is DAZ-associated protein 2 of Bos taurus (Bovine).